Reading from the N-terminus, the 510-residue chain is Monocarboxylate transporter 14 (510 aa).

Residues 1–27 (MYTSHEDIGYDFEDGPKDKKTLKPHPN) lie on the Cytoplasmic side of the membrane. A run of 6 helical transmembrane segments spans residues 28-48 (IDGG…ILIM), 74-94 (WVSS…GLFI), 103-123 (AIIG…AANV), 127-147 (FITF…PAVV), 159-179 (LAQG…TVLL), and 191-209 (AMLI…GALM). The disordered stretch occupies residues 214 to 255 (PGKNPNDPGEKDVRGLPAHSTESVKSTGQQGRTEEKDGGLGN). Polar residues predominate over residues 233–244 (STESVKSTGQQG). Transmembrane regions (helical) follow at residues 315–335 (MFVA…IPFI), 353–373 (FPLT…LGVI), 379–399 (ISVW…IFIL), 408–428 (LAVI…MPVV), 443–463 (GIII…AGWI), and 474–494 (FYIC…QPCI). Residues 495-510 (RIIEQSRRKYMDGAHV) lie on the Cytoplasmic side of the membrane.

It belongs to the major facilitator superfamily. Monocarboxylate porter (TC 2.A.1.13) family.

Its subcellular location is the cell membrane. Functionally, proton-linked monocarboxylate transporter. May catalyze the transport of monocarboxylates across the plasma membrane. The sequence is that of Monocarboxylate transporter 14 (SLC16A14) from Homo sapiens (Human).